Here is a 564-residue protein sequence, read N- to C-terminus: Septation ring formation regulator EzrA (564 aa).

At 1-4 the chain is on the extracellular side; that stretch reads MVLY. Residues 5–23 form a helical membrane-spanning segment; it reads IILAIIVIILIAVGVLFYL. Topologically, residues 24-564 are cytoplasmic; that stretch reads RSNKRQIIEK…KHIEEEVIKQ (541 aa). Coiled-coil stretches lie at residues 99-138, 190-223, 271-300, 350-435, and 471-550; these read SFNASQSEIDDANELMDSYEQSYQQQLEDVNEIIALYKDN, DGNYVQAHNHIAALNEQMKQLRSYMEEIPELIRE, LISRLELEEANDKLANINDKLDDMYDLIEH, VRQF…RRLL, and VKQL…ESVE.

It belongs to the EzrA family.

The protein resides in the cell membrane. Negative regulator of FtsZ ring formation; modulates the frequency and position of FtsZ ring formation. Inhibits FtsZ ring formation at polar sites. Interacts either with FtsZ or with one of its binding partners to promote depolymerization. In Staphylococcus aureus (strain NCTC 8325 / PS 47), this protein is Septation ring formation regulator EzrA.